Here is a 285-residue protein sequence, read N- to C-terminus: Bifunctional protein FolD (285 aa).

NADP(+) contacts are provided by residues 164–166 (GAS), Ile-189, and Ile-230.

Belongs to the tetrahydrofolate dehydrogenase/cyclohydrolase family. In terms of assembly, homodimer.

The catalysed reaction is (6R)-5,10-methylene-5,6,7,8-tetrahydrofolate + NADP(+) = (6R)-5,10-methenyltetrahydrofolate + NADPH. The enzyme catalyses (6R)-5,10-methenyltetrahydrofolate + H2O = (6R)-10-formyltetrahydrofolate + H(+). Its pathway is one-carbon metabolism; tetrahydrofolate interconversion. Functionally, catalyzes the oxidation of 5,10-methylenetetrahydrofolate to 5,10-methenyltetrahydrofolate and then the hydrolysis of 5,10-methenyltetrahydrofolate to 10-formyltetrahydrofolate. This Sulfurimonas denitrificans (strain ATCC 33889 / DSM 1251) (Thiomicrospira denitrificans (strain ATCC 33889 / DSM 1251)) protein is Bifunctional protein FolD.